Reading from the N-terminus, the 271-residue chain is WUSCHEL-related homeobox 6 (271 aa).

The segment at residues 57 to 121 is a DNA-binding region (homeobox; WUS-type); the sequence is AATLRWNPTP…NHKARERLKR (65 aa). Residues 118–195 form a disordered region; sequence RLKRRRREGG…TEESDQRASE (78 aa). Composition is skewed to basic and acidic residues over residues 132–148 and 180–195; these read PHKD…RVDQ and NEDH…RASE.

This sequence belongs to the WUS homeobox family. In terms of tissue distribution, highly expressed in developing ovules. Present in developing primordia and differentiating organs but absent in mature organs.

The protein resides in the nucleus. Transcription factor that plays a central role in ovule patterning by regulating cell proliferation of the maternal integuments and differentiation of the maegaspore mother cell (MCC). Involved in AGAMOUS (AG) repression in leaves. In Arabidopsis thaliana (Mouse-ear cress), this protein is WUSCHEL-related homeobox 6 (WOX6).